The following is a 108-amino-acid chain: Large ribosomal subunit protein uL24 (108 aa).

It belongs to the universal ribosomal protein uL24 family. In terms of assembly, part of the 50S ribosomal subunit.

In terms of biological role, one of two assembly initiator proteins, it binds directly to the 5'-end of the 23S rRNA, where it nucleates assembly of the 50S subunit. Its function is as follows. One of the proteins that surrounds the polypeptide exit tunnel on the outside of the subunit. This chain is Large ribosomal subunit protein uL24, found in Mycoplasmopsis synoviae (strain 53) (Mycoplasma synoviae).